We begin with the raw amino-acid sequence, 434 residues long: UDP-N-acetylglucosamine 1-carboxyvinyltransferase (434 aa).

Residue 22–23 participates in phosphoenolpyruvate binding; that stretch reads KN. Arg93 serves as a coordination point for UDP-N-acetyl-alpha-D-glucosamine. Residue Cys117 is the Proton donor of the active site. Cys117 carries the 2-(S-cysteinyl)pyruvic acid O-phosphothioketal modification. Residues Asp307 and Val329 each contribute to the UDP-N-acetyl-alpha-D-glucosamine site.

This sequence belongs to the EPSP synthase family. MurA subfamily.

The protein localises to the cytoplasm. The enzyme catalyses phosphoenolpyruvate + UDP-N-acetyl-alpha-D-glucosamine = UDP-N-acetyl-3-O-(1-carboxyvinyl)-alpha-D-glucosamine + phosphate. Its pathway is cell wall biogenesis; peptidoglycan biosynthesis. Cell wall formation. Adds enolpyruvyl to UDP-N-acetylglucosamine. The sequence is that of UDP-N-acetylglucosamine 1-carboxyvinyltransferase from Coxiella burnetii (strain CbuG_Q212) (Coxiella burnetii (strain Q212)).